Reading from the N-terminus, the 482-residue chain is Pup--protein ligase (482 aa).

Glu16 serves as a coordination point for Mg(2+). Residue Arg60 participates in ATP binding. Tyr62 contacts Mg(2+). The active-site Proton acceptor is the Asp64. Glu70 is a Mg(2+) binding site. 2 residues coordinate ATP: Thr73 and Trp440.

This sequence belongs to the Pup ligase/Pup deamidase family. Pup-conjugating enzyme subfamily.

The catalysed reaction is ATP + [prokaryotic ubiquitin-like protein]-L-glutamate + [protein]-L-lysine = ADP + phosphate + N(6)-([prokaryotic ubiquitin-like protein]-gamma-L-glutamyl)-[protein]-L-lysine.. The protein operates within protein degradation; proteasomal Pup-dependent pathway. Its pathway is protein modification; protein pupylation. In terms of biological role, catalyzes the covalent attachment of the prokaryotic ubiquitin-like protein modifier Pup to the proteasomal substrate proteins, thereby targeting them for proteasomal degradation. This tagging system is termed pupylation. The ligation reaction involves the side-chain carboxylate of the C-terminal glutamate of Pup and the side-chain amino group of a substrate lysine. The chain is Pup--protein ligase from Corynebacterium glutamicum (strain R).